Consider the following 843-residue polypeptide: Protein P (843 aa).

Residues 1–177 (MPLSYQHFRK…FCGSPYSWEQ (177 aa)) form a terminal protein domain (TP) region. The interval 178–346 (ELQHGRLVFQ…YCLSHIVNLL (169 aa)) is spacer. Disordered stretches follow at residues 218-243 (LKQS…SGSI) and 290-316 (STSK…RSQS). A compositionally biased stretch (polar residues) spans 290-299 (STSKRQSSSG). A polymerase/reverse transcriptase domain (RT) region spans residues 347-690 (EDWGPCTEHG…YLHLYPVARQ (344 aa)). Residues 357–600 (EHNIRIPRTP…YSLNFMGYVI (244 aa)) form the Reverse transcriptase domain. Residues Asp429, Asp551, and Asp552 each contribute to the Mg(2+) site.

The protein belongs to the hepadnaviridae P protein family.

The catalysed reaction is DNA(n) + a 2'-deoxyribonucleoside 5'-triphosphate = DNA(n+1) + diphosphate. It carries out the reaction Endonucleolytic cleavage to 5'-phosphomonoester.. Activated by host HSP70 and HSP40 in vitro to be able to bind the epsilon loop of the pgRNA. Because deletion of the RNase H region renders the protein partly chaperone-independent, the chaperones may be needed indirectly to relieve occlusion of the RNA-binding site by this domain. Inhibited by several reverse-transcriptase inhibitors: Lamivudine, Adefovir and Entecavir. Multifunctional enzyme that converts the viral RNA genome into dsDNA in viral cytoplasmic capsids. This enzyme displays a DNA polymerase activity that can copy either DNA or RNA templates, and a ribonuclease H (RNase H) activity that cleaves the RNA strand of RNA-DNA heteroduplexes in a partially processive 3'- to 5'-endonucleasic mode. Neo-synthesized pregenomic RNA (pgRNA) are encapsidated together with the P protein, and reverse-transcribed inside the nucleocapsid. Initiation of reverse-transcription occurs first by binding the epsilon loop on the pgRNA genome, and is initiated by protein priming, thereby the 5'-end of (-)DNA is covalently linked to P protein. Partial (+)DNA is synthesized from the (-)DNA template and generates the relaxed circular DNA (RC-DNA) genome. After budding and infection, the RC-DNA migrates in the nucleus, and is converted into a plasmid-like covalently closed circular DNA (cccDNA). The activity of P protein does not seem to be necessary for cccDNA generation, and is presumably released from (+)DNA by host nuclear DNA repair machinery. In Homo sapiens (Human), this protein is Protein P.